Consider the following 1151-residue polypeptide: PPi-type phosphoenolpyruvate carboxykinase 1 (1151 aa).

A coiled-coil region spans residues 1083–1129; the sequence is RQKLEVAKLNKDLAYLNKTIAEKPRLAETLNKQIAAVKEELQYVSSE.

Belongs to the PPi-type phosphoenolpyruvate carboxykinase family. In terms of assembly, monomer and trimer; forms heterotrimers with PEPCK2 and PEPCK3.

Its subcellular location is the cytoplasm. The protein resides in the cytosol. It catalyses the reaction oxaloacetate + diphosphate = phosphoenolpyruvate + phosphate + CO2. In terms of biological role, inorganic pyrophosphate (PPi)-dependent phosphoenolpyruvate carboxykinase, which regulates the carbon flow of the central metabolism by fixing CO(2) to phosphoenolpyruvate to produce oxaloacetate. Can also produce pyruvate and diphosphate from phosphoenolpyruvate and phosphate. The polypeptide is PPi-type phosphoenolpyruvate carboxykinase 1 (Entamoeba histolytica (strain ATCC 30459 / HM-1:IMSS / ABRM)).